A 434-amino-acid polypeptide reads, in one-letter code: Probable proline transporter 2 (434 aa).

11 consecutive transmembrane segments (helical) span residues 26–46 (PWYQVGFVLTTGVNSAYVLGY), 49–69 (SVMVPLGWIGGTCGLILAAAI), 106–126 (LTWALQYVNLFMINTGFIILA), 149–169 (IALSGFVCALFAFGIPYLSAL), 171–191 (IWLGFSTFFSLIYITIAFVLS), 213–233 (IFTTIGAVANLVFAYNTGMLP), 251–271 (LWFQFTVGSLPLYAVTFMGYW), 297–317 (LSAFLQTVIALHIFASPMYEF), 339–359 (VGVRGGYLTVNTLVAAMLPFL), 362–382 (FMSLTGALSTFPLTFVLANHM), and 403–423 (VAGFSLLSIAAAVAALRLIMV).

Belongs to the amino acid/polyamine transporter 2 family. Amino acid/auxin permease (AAAP) (TC 2.A.18.3) subfamily.

It is found in the cell membrane. Proline transporter that mediates proline transport across the plasma membrane. The polypeptide is Probable proline transporter 2 (Oryza sativa subsp. japonica (Rice)).